A 536-amino-acid polypeptide reads, in one-letter code: Testis-specific protein 10-interacting protein (536 aa).

Disordered regions lie at residues 1-94 (MLNT…LFSS), 185-234 (SQGL…PGQG), and 246-305 (MEEE…FKGP). The segment covering 48–64 (SGDSLQSQSCQQQRSYS) has biased composition (low complexity). The span at 71-83 (KERKPRRRNKKGR) shows a compositional bias: basic residues. Positions 375 to 451 (QAWEQQQLKE…LQGIQHRVQA (77 aa)) form a coiled coil. The disordered stretch occupies residues 491–536 (GNAEGIPRKHRSYRSFGVEMESSPQSPPKTEPTSSQPGRHPSPTLD).

This chain is Testis-specific protein 10-interacting protein (Tsga10ip), found in Rattus norvegicus (Rat).